The sequence spans 62 residues: MDEKLSRVDPKLLDLLVCPLSKGRLSYDREHNELVSEKARLAYPIRDGIPIMLMSEARRLDD.

Belongs to the UPF0434 family.

The chain is UPF0434 protein RL4569 from Rhizobium johnstonii (strain DSM 114642 / LMG 32736 / 3841) (Rhizobium leguminosarum bv. viciae).